The chain runs to 89 residues: LYR motif-containing protein 4 (89 aa).

The protein belongs to the complex I LYR family.

It is found in the mitochondrion. Its subcellular location is the nucleus. It participates in cofactor biosynthesis; iron-sulfur cluster biosynthesis. Functionally, required for nuclear and mitochondrial iron-sulfur protein biosynthesis. This is LYR motif-containing protein 4 (lyrm4) from Danio rerio (Zebrafish).